A 297-amino-acid chain; its full sequence is Ketohexokinase (297 aa).

D15, G41, N42, and N45 together coordinate beta-D-fructose. Residues R107, A225–G228, and G254–D257 contribute to the ATP site. D257 contacts beta-D-fructose.

It belongs to the carbohydrate kinase PfkB family. Homodimer.

It carries out the reaction beta-D-fructose + ATP = beta-D-fructose 1-phosphate + ADP + H(+). The protein operates within carbohydrate metabolism; fructose metabolism. Its activity is regulated as follows. Requires potassium. Inhibition by ADP. Catalyzes the phosphorylation of the ketose sugar fructose to fructose-1-phosphate. In Pongo abelii (Sumatran orangutan), this protein is Ketohexokinase (KHK).